Reading from the N-terminus, the 365-residue chain is Protein RecA (365 aa).

Residue 73–80 (GPESSGKT) coordinates ATP.

This sequence belongs to the RecA family.

Its subcellular location is the cytoplasm. In terms of biological role, can catalyze the hydrolysis of ATP in the presence of single-stranded DNA, the ATP-dependent uptake of single-stranded DNA by duplex DNA, and the ATP-dependent hybridization of homologous single-stranded DNAs. It interacts with LexA causing its activation and leading to its autocatalytic cleavage. This is Protein RecA from Prochlorococcus marinus (strain MIT 9312).